The sequence spans 551 residues: Dol-P-Man:Man(7)GlcNAc(2)-PP-Dol alpha-1,6-mannosyltransferase (551 aa).

Topologically, residues 1-2 are lumenal; that stretch reads MR. A helical transmembrane segment spans residues 3–23; that stretch reads WSVLDTVLLTVISFHLIQAPF. Residues 24-61 lie on the Cytoplasmic side of the membrane; that stretch reads TKVEESFNIQAIHDILTYSVFDISQYDHLKFPGVVPRT. The helical transmembrane segment at 62 to 82 threads the bilayer; that stretch reads FVGAVIIAMLSRPYLYLSSLI. Topologically, residues 83 to 89 are lumenal; that stretch reads QTSRPTS. The chain crosses the membrane as a helical span at residues 90–110; the sequence is IDVQLVVRGIVGLTNGLSFIY. The Cytoplasmic portion of the chain corresponds to 111–136; that stretch reads LKNCLQDMFDEITEKKKEENEDKDIY. A helical membrane pass occupies residues 137-157; that stretch reads IYDSAGTWFLLFLIGSFHLMF. At 158-178 the chain is on the lumenal side; the sequence is YSTRTLPNFVMTLPLTNVALG. The chain crosses the membrane as a helical span at residues 179-199; the sequence is WVLLGRYNAAIFLSALVAIVF. At 200–202 the chain is on the cytoplasmic side; that stretch reads RLE. The chain crosses the membrane as a helical span at residues 203–223; sequence VSALSAGIALFSVIFKKISLF. Topologically, residues 224–227 are lumenal; that stretch reads DAIK. Residues 228-248 form a helical membrane-spanning segment; the sequence is FGIFGLGLGSAISITVDSYFW. At 249–275 the chain is on the cytoplasmic side; the sequence is QEWCLPEVDGFLFNVVAGYASKWGVEP. A helical transmembrane segment spans residues 276-296; the sequence is VTAYFTHYLRMMFMPPTVLLL. Residues 297 to 303 are Lumenal-facing; sequence NYFGYKL. Residues 304 to 324 form a helical membrane-spanning segment; the sequence is APAKLKIVSLASLFHIIVLSF. Over 325 to 331 the chain is Cytoplasmic; it reads QPHKEWR. A helical membrane pass occupies residues 332–352; sequence FIIYAVPSIMLLGATGAAHLW. The Lumenal portion of the chain corresponds to 353–365; it reads ENMKVKKITNVLC. A helical transmembrane segment spans residues 366–386; that stretch reads LAILPLSIMTSFFISMAFLYI. At 387-417 the chain is on the cytoplasmic side; that stretch reads SRMNYPGGEALTSFNDMIVEKNITNATVHIS. A helical transmembrane segment spans residues 418–438; it reads IPPCMTGVTLFGELNYGVYGI. Residues 439 to 551 lie on the Lumenal side of the membrane; the sequence is NYDKTENTTL…KRIKQDEKTD (113 aa).

This sequence belongs to the glycosyltransferase 22 family.

Its subcellular location is the endoplasmic reticulum membrane. It catalyses the reaction an alpha-D-Man-(1-&gt;2)-alpha-D-Man-(1-&gt;2)-alpha-D-Man-(1-&gt;3)-[alpha-D-Man-(1-&gt;2)-alpha-D-Man-(1-&gt;3)-alpha-D-Man-(1-&gt;6)]-beta-D-Man-(1-&gt;4)-beta-D-GlcNAc-(1-&gt;4)-alpha-D-GlcNAc-diphospho-di-trans,poly-cis-dolichol + a di-trans,poly-cis-dolichyl beta-D-mannosyl phosphate = an alpha-D-Man-(1-&gt;2)-alpha-D-Man-(1-&gt;2)-alpha-D-Man-(1-&gt;3)-[alpha-D-Man-(1-&gt;2)-alpha-D-Man-(1-&gt;3)-[alpha-D-Man-(1-&gt;6)]-alpha-D-Man-(1-&gt;6)]-beta-D-Man-(1-&gt;4)-beta-D-GlcNAc-(1-&gt;4)-alpha-D-GlcNAc-diphospho-di-trans,poly-cis-dolichol + a di-trans,poly-cis-dolichyl phosphate + H(+). Its pathway is protein modification; protein glycosylation. Functionally, mannosyltransferase that operates in the biosynthetic pathway of dolichol-linked oligosaccharides, the glycan precursors employed in protein asparagine (N)-glycosylation. The assembly of dolichol-linked oligosaccharides begins on the cytosolic side of the endoplasmic reticulum membrane and finishes in its lumen. The sequential addition of sugars to dolichol pyrophosphate produces dolichol-linked oligosaccharides containing fourteen sugars, including two GlcNAcs, nine mannoses and three glucoses. Once assembled, the oligosaccharide is transferred from the lipid to nascent proteins by oligosaccharyltransferases. In the lumen of the endoplasmic reticulum, adds the eighth mannose residue in an alpha-1,6 linkage onto Man(7)GlcNAc(2)-PP-dolichol to produce Man(8)GlcNAc(2)-PP-dolichol. This is Dol-P-Man:Man(7)GlcNAc(2)-PP-Dol alpha-1,6-mannosyltransferase (ALG12) from Saccharomyces cerevisiae (strain ATCC 204508 / S288c) (Baker's yeast).